A 483-amino-acid chain; its full sequence is tRNA-2-methylthio-N(6)-dimethylallyladenosine synthase (483 aa).

An MTTase N-terminal domain is found at 31-148 (KKLYIETQGC…LPQMLDQHQD (118 aa)). 6 residues coordinate [4Fe-4S] cluster: cysteine 40, cysteine 77, cysteine 111, cysteine 192, cysteine 196, and cysteine 199. Residues 178–410 (RVEGFKAFVS…QHWIKQSSIR (233 aa)) enclose the Radical SAM core domain. In terms of domain architecture, TRAM spans 413 to 477 (DAMQGTIQRV…LNLVYGELLN (65 aa)).

Belongs to the methylthiotransferase family. MiaB subfamily. In terms of assembly, monomer. It depends on [4Fe-4S] cluster as a cofactor.

The protein localises to the cytoplasm. It catalyses the reaction N(6)-dimethylallyladenosine(37) in tRNA + (sulfur carrier)-SH + AH2 + 2 S-adenosyl-L-methionine = 2-methylsulfanyl-N(6)-dimethylallyladenosine(37) in tRNA + (sulfur carrier)-H + 5'-deoxyadenosine + L-methionine + A + S-adenosyl-L-homocysteine + 2 H(+). Functionally, catalyzes the methylthiolation of N6-(dimethylallyl)adenosine (i(6)A), leading to the formation of 2-methylthio-N6-(dimethylallyl)adenosine (ms(2)i(6)A) at position 37 in tRNAs that read codons beginning with uridine. In Acinetobacter baylyi (strain ATCC 33305 / BD413 / ADP1), this protein is tRNA-2-methylthio-N(6)-dimethylallyladenosine synthase.